The chain runs to 378 residues: uncharacterized protein (378 aa).

This is an uncharacterized protein from Escherichia coli (strain K12).